A 628-amino-acid chain; its full sequence is Siderophore iron transporter 1 (628 aa).

14 consecutive transmembrane segments (helical) span residues Ile68 to Gly88, Leu107 to Ala127, Ile132 to Ile152, Val164 to Ala184, Leu194 to Val214, Gly225 to Leu245, Ile285 to Ala305, Ile317 to Ile337, Gly354 to Asp374, Ile394 to Ile414, Lys420 to Tyr440, Ser448 to Thr468, Leu488 to Trp508, and Lys559 to Leu579.

The protein belongs to the major facilitator superfamily.

The protein resides in the endosome membrane. In terms of biological role, involved in the transport of siderophore ferrioxamine B and so has a role in iron homeostasis. In Saccharomyces cerevisiae (strain ATCC 204508 / S288c) (Baker's yeast), this protein is Siderophore iron transporter 1 (SIT1).